Consider the following 136-residue polypeptide: Keratin-associated protein 15-1 (136 aa).

This sequence belongs to the PMG family. In terms of assembly, interacts with hair keratins.

Functionally, in the hair cortex, hair keratin intermediate filaments are embedded in an interfilamentous matrix, consisting of hair keratin-associated proteins (KRTAP), which are essential for the formation of a rigid and resistant hair shaft through their extensive disulfide bond cross-linking with abundant cysteine residues of hair keratins. The matrix proteins include the high-sulfur and high-glycine-tyrosine keratins. In Capra hircus (Goat), this protein is Keratin-associated protein 15-1 (KRTAP15-1).